Consider the following 429-residue polypeptide: Adenylosuccinate synthetase (429 aa).

GTP is bound by residues 12–18 and 40–42; these read GDEGKGK and GHT. D13 acts as the Proton acceptor in catalysis. Positions 13 and 40 each coordinate Mg(2+). Residues 13-16, 38-41, T129, R143, Q223, T238, and R302 contribute to the IMP site; these read DEGK and NAGH. Residue H41 is the Proton donor of the active site. Residue 298–304 participates in substrate binding; the sequence is VVTGRKR. Residues R304, 330 to 332, and 412 to 414 each bind GTP; these read KLD and STS.

This sequence belongs to the adenylosuccinate synthetase family. Homodimer. Mg(2+) is required as a cofactor.

The protein localises to the cytoplasm. The catalysed reaction is IMP + L-aspartate + GTP = N(6)-(1,2-dicarboxyethyl)-AMP + GDP + phosphate + 2 H(+). It participates in purine metabolism; AMP biosynthesis via de novo pathway; AMP from IMP: step 1/2. Its function is as follows. Plays an important role in the de novo pathway of purine nucleotide biosynthesis. Catalyzes the first committed step in the biosynthesis of AMP from IMP. The protein is Adenylosuccinate synthetase of Brucella abortus (strain 2308).